The primary structure comprises 270 residues: UPF0354 protein BPUM_2629 (270 aa).

It belongs to the UPF0354 family.

In Bacillus pumilus (strain SAFR-032), this protein is UPF0354 protein BPUM_2629.